We begin with the raw amino-acid sequence, 91 residues long: Large ribosomal subunit protein bL28 (91 aa).

Residues 1–23 are disordered; the sequence is MSRVCELTGKGPMSGNNVSHANN.

Belongs to the bacterial ribosomal protein bL28 family.

The sequence is that of Large ribosomal subunit protein bL28 from Paracoccus denitrificans (strain Pd 1222).